Here is a 49-residue protein sequence, read N- to C-terminus: Large ribosomal subunit protein bL33 (49 aa).

Belongs to the bacterial ribosomal protein bL33 family.

In Syntrophomonas wolfei subsp. wolfei (strain DSM 2245B / Goettingen), this protein is Large ribosomal subunit protein bL33.